The following is a 352-amino-acid chain: Cell division protein ZipA (352 aa).

Over 1 to 6 the chain is Periplasmic; it reads MKDLQL. The chain crosses the membrane as a helical span at residues 7-27; sequence VLFVLGAIAIIAVLVHGFWSI. Residues 28–352 lie on the Cytoplasmic side of the membrane; sequence RKQQPKSMKQ…KDYLRRLNAA (325 aa). Disordered regions lie at residues 78 to 120 and 138 to 160; these read KPVL…HVEP and PAPT…TSTA. The segment covering 83–105 has biased composition (polar residues); it reads TNLSQKPHSGTTKLTDTPLQDSL. Residues 111–120 are compositionally biased toward basic and acidic residues; the sequence is HKTEPEHVEP. Residues 141 to 160 are compositionally biased toward polar residues; it reads TASTSMNTPKKIFNPSTSTA.

It belongs to the ZipA family. Interacts with FtsZ via their C-terminal domains.

It is found in the cell inner membrane. In terms of biological role, essential cell division protein that stabilizes the FtsZ protofilaments by cross-linking them and that serves as a cytoplasmic membrane anchor for the Z ring. Also required for the recruitment to the septal ring of downstream cell division proteins. This Shewanella frigidimarina (strain NCIMB 400) protein is Cell division protein ZipA.